The primary structure comprises 97 residues: Large ribosomal subunit protein uL23 (97 aa).

This sequence belongs to the universal ribosomal protein uL23 family. In terms of assembly, part of the 50S ribosomal subunit. Contacts protein L29, and trigger factor when it is bound to the ribosome.

In terms of biological role, one of the early assembly proteins it binds 23S rRNA. One of the proteins that surrounds the polypeptide exit tunnel on the outside of the ribosome. Forms the main docking site for trigger factor binding to the ribosome. This Agrobacterium fabrum (strain C58 / ATCC 33970) (Agrobacterium tumefaciens (strain C58)) protein is Large ribosomal subunit protein uL23.